A 170-amino-acid chain; its full sequence is Phosphopantetheine adenylyltransferase (170 aa).

Ser-14 contributes to the substrate binding site. ATP-binding positions include 14 to 15 (SF) and His-22. Substrate is bound by residues Lys-46, Leu-79, and Arg-93. Residues 94–96 (GIR), Glu-104, and 129–135 (IAEVSST) each bind ATP.

The protein belongs to the bacterial CoaD family. Homohexamer. It depends on Mg(2+) as a cofactor.

Its subcellular location is the cytoplasm. It catalyses the reaction (R)-4'-phosphopantetheine + ATP + H(+) = 3'-dephospho-CoA + diphosphate. It participates in cofactor biosynthesis; coenzyme A biosynthesis; CoA from (R)-pantothenate: step 4/5. Functionally, reversibly transfers an adenylyl group from ATP to 4'-phosphopantetheine, yielding dephospho-CoA (dPCoA) and pyrophosphate. This Neisseria meningitidis serogroup C (strain 053442) protein is Phosphopantetheine adenylyltransferase.